The following is a 74-amino-acid chain: WAP four-disulfide core domain protein 18 (74 aa).

The signal sequence occupies residues 1–24 (MKTATVFVLVALIFMTMTTAWALS). The WAP domain maps to 26–73 (PKEKPGACPKPPPRSFGTCDERCTGDGSCSGNMKCCSNGCGHACKPPV).

It is found in the secreted. Its function is as follows. Could have proteinase inhibiting capacity. This chain is WAP four-disulfide core domain protein 18 (WFDC18), found in Bos taurus (Bovine).